The primary structure comprises 186 residues: Peptidoglycan-recognition protein SD (186 aa).

The N-terminal stretch at 1–18 is a signal peptide; it reads MTWIGLLIVGLTAIAVQG. Positions 47–169 constitute an N-acetylmuramoyl-L-alanine amidase domain; it reads AVIAHTAGGA…RQVSATMSPG (123 aa). Cysteines 57 and 63 form a disulfide. The N-linked (GlcNAc...) asparagine glycan is linked to Asn181.

It belongs to the N-acetylmuramoyl-L-alanine amidase 2 family.

The protein localises to the secreted. Peptidoglycan-recognition protein that plays a key role in innate immunity by binding to peptidoglycans (PGN) of Gram-positive bacteria and activating the Toll pathway. Has no activity against on Gram-negative bacteria and fungi. Shows some partial redundancy with PRPGP-SA in Gram-positive bacteria recognition. May act by activating the proteolytic cleavage of Spatzle and the subsequent activation of Toll pathway. Recognizes S.aureus PGN. This Drosophila simulans (Fruit fly) protein is Peptidoglycan-recognition protein SD (PGRP-SD).